We begin with the raw amino-acid sequence, 473 residues long: NADH-quinone oxidoreductase subunit N (473 aa).

14 helical membrane-spanning segments follow: residues 3-23 (LHYL…LVIA), 30-50 (LAFY…CSLL), 62-82 (FSSM…FLWL), 99-119 (FYLL…SEHF), 120-140 (ASFF…IAYS), 153-173 (YLIL…IVYL), 195-215 (MLFT…LSLV), 230-252 (LPTT…WKLF), 262-282 (IVLT…NLLA), 291-311 (ILAF…FLFN), 326-346 (ALLF…SILM), 368-388 (AASL…LGFM), 408-428 (FLVI…MVML), and 444-464 (VASL…PALF).

It belongs to the complex I subunit 2 family. In terms of assembly, NDH-1 is composed of 13 different subunits. Subunits NuoA, H, J, K, L, M, N constitute the membrane sector of the complex.

The protein localises to the cell inner membrane. It catalyses the reaction a quinone + NADH + 5 H(+)(in) = a quinol + NAD(+) + 4 H(+)(out). NDH-1 shuttles electrons from NADH, via FMN and iron-sulfur (Fe-S) centers, to quinones in the respiratory chain. The immediate electron acceptor for the enzyme in this species is believed to be ubiquinone. Couples the redox reaction to proton translocation (for every two electrons transferred, four hydrogen ions are translocated across the cytoplasmic membrane), and thus conserves the redox energy in a proton gradient. This is NADH-quinone oxidoreductase subunit N from Shewanella woodyi (strain ATCC 51908 / MS32).